A 245-amino-acid chain; its full sequence is Sugar fermentation stimulation protein homolog (245 aa).

The protein belongs to the SfsA family.

This chain is Sugar fermentation stimulation protein homolog, found in Yersinia pestis bv. Antiqua (strain Nepal516).